The primary structure comprises 313 residues: Pyrimidine-specific ribonucleoside hydrolase RihB (313 aa).

Catalysis depends on D11, which acts as the Proton acceptor. 3 residues coordinate Ca(2+): D11, D16, and V124. The substrate site is built by Q227 and H239. Position 240 (D240) interacts with Ca(2+).

Belongs to the IUNH family. RihB subfamily. As to quaternary structure, homotetramer. It depends on Ca(2+) as a cofactor.

The catalysed reaction is a pyrimidine ribonucleoside + H2O = a pyrimidine nucleobase + D-ribose. Functionally, hydrolyzes cytidine or uridine to ribose and cytosine or uracil, respectively. Has a clear preference for cytidine over uridine. Strictly specific for ribonucleosides. The chain is Pyrimidine-specific ribonucleoside hydrolase RihB from Escherichia coli (strain SMS-3-5 / SECEC).